The sequence spans 62 residues: Photosystem II reaction center protein Z (62 aa).

Transmembrane regions (helical) follow at residues 8–28 (AVFALIATSSILLISVPVVFA) and 41–61 (FSGTSLWIGLVFLVGILNSLI).

This sequence belongs to the PsbZ family. In terms of assembly, PSII is composed of 1 copy each of membrane proteins PsbA, PsbB, PsbC, PsbD, PsbE, PsbF, PsbH, PsbI, PsbJ, PsbK, PsbL, PsbM, PsbT, PsbY, PsbZ, Psb30/Ycf12, at least 3 peripheral proteins of the oxygen-evolving complex and a large number of cofactors. It forms dimeric complexes.

It is found in the plastid. It localises to the chloroplast thylakoid membrane. May control the interaction of photosystem II (PSII) cores with the light-harvesting antenna, regulates electron flow through the 2 photosystem reaction centers. PSII is a light-driven water plastoquinone oxidoreductase, using light energy to abstract electrons from H(2)O, generating a proton gradient subsequently used for ATP formation. The polypeptide is Photosystem II reaction center protein Z (Coffea arabica (Arabian coffee)).